Consider the following 564-residue polypeptide: Iron-sensing transcriptional repressor (564 aa).

Residues 12–36 form a GATA-type 1 zinc finger; sequence CSNCHKTTTSLWRRGPDNSLLCNAC. The interval 100–170 is disordered; the sequence is ASKSQSGRKS…SSPPHEPSVT (71 aa). Ser109 carries the phosphoserine modification. The segment covering 109–120 has biased composition (low complexity); sequence SLSPNPSSVPSS. Over residues 135 to 148 the composition is skewed to polar residues; the sequence is QIVSDTTTETSNGT. A GATA-type 2 zinc finger spans residues 172–196; sequence CQNCATTNTPLWRRDESGNPICNAC. Disordered stretches follow at residues 226–285, 381–409, and 443–496; these read GNAN…NTGV, DSSK…NPLG, and LLNP…VQGS. Polar residues-rich tracts occupy residues 240 to 253, 260 to 271, 381 to 407, and 450 to 486; these read SGDS…QSTR, SFPNGNGHASGN, DSSK…QSNP, and PSNS…SPVS.

In terms of assembly, interacts with tup11.

It is found in the nucleus. Activated by iron. Transcriptional repressor that binds the consensus promoter sequence 5'-[AT]GATAA-3' during iron-replete conditions to down-regulate transcription of target genes. Represses the expression of the iron transporter fio1 in response to high iron concentrations. Also represses the expression of str1, str2 and str3. Represses the expression of shu1 in presence of iron. The protein is Iron-sensing transcriptional repressor of Schizosaccharomyces pombe (strain 972 / ATCC 24843) (Fission yeast).